We begin with the raw amino-acid sequence, 467 residues long: Serine/threonine-protein kinase AFC1 (467 aa).

A Protein kinase domain is found at 115-443 (YQILSKMGEG…AREALNHPFF (329 aa)). Residues 121–129 (MGEGTFGQV) and K144 contribute to the ATP site. D240 functions as the Proton acceptor in the catalytic mechanism. Positions 447–467 (REQSIPPFNPNPHPFLYNQKN) are disordered.

The protein belongs to the protein kinase superfamily. CMGC Ser/Thr protein kinase family. Lammer subfamily.

The catalysed reaction is L-seryl-[protein] + ATP = O-phospho-L-seryl-[protein] + ADP + H(+). It carries out the reaction L-threonyl-[protein] + ATP = O-phospho-L-threonyl-[protein] + ADP + H(+). It catalyses the reaction L-tyrosyl-[protein] + ATP = O-phospho-L-tyrosyl-[protein] + ADP + H(+). In terms of biological role, activator of yeast transcription factor, STE12. This Arabidopsis thaliana (Mouse-ear cress) protein is Serine/threonine-protein kinase AFC1 (AFC1).